A 402-amino-acid chain; its full sequence is Guanine nucleotide-binding protein subunit alpha-1 (402 aa).

The span at 1–12 shows a compositional bias: polar residues; it reads MGCSASKPSEPS. The disordered stretch occupies residues 1–70; sequence MGCSASKPSE…PEPQKPAEPA (70 aa). Gly-2 is lipidated: N-myristoyl glycine. Cys-3 carries S-palmitoyl cysteine lipidation. Positions 23 to 33 are enriched in basic and acidic residues; that stretch reads KKVEQVPEPKP. The span at 34-69 shows a compositional bias: pro residues; that stretch reads EPQPQPEPQPQPEPPKPAEPAPAPAPAPEPQKPAEP. Residues 82–402 form the G-alpha domain; it reads EAYGLLLCGA…FISDKYYQDA (321 aa). The interval 85 to 98 is G1 motif; the sequence is GLLLCGAGESGKTT. 14 residues coordinate GTP: Glu-93, Ser-94, Gly-95, Lys-96, Thr-97, Thr-98, Asp-198, Leu-223, Ser-229, Gly-251, Asn-317, Lys-318, Asp-320, and Ala-377. Thr-97 is a Mg(2+) binding site. The tract at residues 221–229 is G2 motif; the sequence is DVLRARIRS. Ser-229 lines the Mg(2+) pocket. The interval 244–253 is G3 motif; the sequence is IRIFDVGGQK. The tract at residues 313–320 is G4 motif; that stretch reads FLVCNKFD. The interval 375–380 is G5 motif; it reads IVALNG.

It belongs to the G-alpha family. G proteins are composed of 3 units; alpha, beta and gamma. The alpha chain contains the guanine nucleotide binding site. Mg(2+) serves as cofactor.

The protein localises to the cytoplasm. It localises to the perinuclear region. Its subcellular location is the endomembrane system. Functionally, guanine nucleotide-binding proteins (G proteins) are involved as modulators or transducers in various transmembrane signaling systems. The polypeptide is Guanine nucleotide-binding protein subunit alpha-1 (GA1) (Trichomonas vaginalis).